Consider the following 307-residue polypeptide: UPF0749 protein MT1871 (307 aa).

Residues 1–23 (MAESDRLLGGYDPNAGYSAHAGA) form the signal peptide. A run of 2 helical transmembrane segments spans residues 67 to 87 (VSWMWQALAATLVAAVFAAAV) and 152 to 172 (VLSLAAASAPVVGPGLTVTVT).

It belongs to the UPF0749 family.

It is found in the cell membrane. The chain is UPF0749 protein MT1871 from Mycobacterium tuberculosis (strain CDC 1551 / Oshkosh).